Here is a 179-residue protein sequence, read N- to C-terminus: UPF0227 protein Sbal195_2522 (179 aa).

This sequence belongs to the UPF0227 family.

This is UPF0227 protein Sbal195_2522 from Shewanella baltica (strain OS195).